A 998-amino-acid polypeptide reads, in one-letter code: Regulator of telomere elongation helicase 1 homolog (998 aa).

In terms of domain architecture, Helicase ATP-binding spans 7-324 (AGIPVHFPFE…KEMLLELEKA (318 aa)). 42 to 49 (SPTGTGKT) contacts ATP. 4 residues coordinate [4Fe-4S] cluster: C148, C166, C175, and C211. A DEAH box motif is present at residues 254 to 257 (DEAH). A disordered region spans residues 426-454 (QNAGKPAPKQQQQGGWLGKGNNTSNSSSS). Phosphothreonine is present on T887.

Belongs to the helicase family. RAD3/XPD subfamily.

Its subcellular location is the nucleus. The catalysed reaction is ATP + H2O = ADP + phosphate + H(+). A probable ATP-dependent DNA helicase implicated in DNA repair and the maintenance of genomic stability. Acts as an anti-recombinase to counteract toxic recombination and limit crossover during meiosis. Regulates meiotic recombination and crossover homeostasis by physically dissociating strand invasion events and thereby promotes noncrossover repair by meiotic synthesis dependent strand annealing (SDSA) as well as disassembly of D loop recombination intermediates. The sequence is that of Regulator of telomere elongation helicase 1 homolog from Drosophila willistoni (Fruit fly).